The chain runs to 879 residues: DNA mismatch repair protein MutS (879 aa).

639 to 646 (GPNMGGKS) is a binding site for ATP.

It belongs to the DNA mismatch repair MutS family.

This protein is involved in the repair of mismatches in DNA. It is possible that it carries out the mismatch recognition step. This protein has a weak ATPase activity. The polypeptide is DNA mismatch repair protein MutS (Aromatoleum aromaticum (strain DSM 19018 / LMG 30748 / EbN1) (Azoarcus sp. (strain EbN1))).